A 541-amino-acid chain; its full sequence is Nif-specific regulatory protein (541 aa).

In terms of domain architecture, GAF spans 23–158; the sequence is RLETTLNNFV…MAANLAGRAI (136 aa). The segment at 170-191 is disordered; that stretch reads TFAEEQQEQQNSRDEQSQSSAR. In terms of domain architecture, Sigma-54 factor interaction spans 200–428; it reads IIGESTALMT…LENCVRRTAT (229 aa). Residues 228 to 235 and 291 to 300 each bind ATP; these read GETGTGKE and ANGGTLLLDE. The inter-domain linker stretch occupies residues 429-498; it reads LARSKTITSS…SAGVASNLIE (70 aa). A divalent metal cation-binding residues include Cys-442 and Cys-447. The segment at 499 to 541 is C-terminal DNA-binding domain; that stretch reads RDRLISALEEAGWNQAKAARILEKTPRQVGYALRRHGVDVRKL. The segment at residues 513–532 is a DNA-binding region (H-T-H motif); the sequence is QAKAARILEKTPRQVGYALR.

In terms of assembly, interacts with sigma-54.

Functionally, required for activation of most nif operons, which are directly involved in nitrogen fixation. The sequence is that of Nif-specific regulatory protein (nifA) from Rhizobium meliloti (strain 1021) (Ensifer meliloti).